The following is a 108-amino-acid chain: Immunoglobulin kappa variable 11-125 (108 aa).

The framework-1 stretch occupies residues 1-23; it reads DVQMIQSPSSLSASLGDIVTMTC. An intrachain disulfide couples cysteine 23 to cysteine 88. Residues 24–34 form a complementarity-determining-1 region; that stretch reads QASQGTSINLN. The interval 35 to 49 is framework-2; it reads WFQQKPGKAPKLLIY. Residues 50 to 56 are complementarity-determining-2; it reads GASILED. Residues 57 to 88 are framework-3; the sequence is GVPSRFSGSRYGTDFTLTISSLEDEDMATYFC. The segment at 89–97 is complementarity-determining-3; that stretch reads LQHSYLPYT. Residues 98–108 are framework-4; the sequence is FGGGTKLEIKR.

The protein is Immunoglobulin kappa variable 11-125 of Mus musculus (Mouse).